We begin with the raw amino-acid sequence, 878 residues long: Phosphoenolpyruvate carboxylase (878 aa).

Residues His140 and Lys545 contribute to the active site.

The protein belongs to the PEPCase type 1 family. The cofactor is Mg(2+).

The enzyme catalyses oxaloacetate + phosphate = phosphoenolpyruvate + hydrogencarbonate. Its function is as follows. Forms oxaloacetate, a four-carbon dicarboxylic acid source for the tricarboxylic acid cycle. This is Phosphoenolpyruvate carboxylase from Pseudomonas syringae pv. tomato (strain ATCC BAA-871 / DC3000).